The sequence spans 114 residues: PDZK1-interacting protein 1 (114 aa).

Residues 1–28 (MSALSLVILGLLMAVPPASCQQGLGNLQ) are Extracellular-facing. A helical membrane pass occupies residues 29–51 (PWMQGLIAVAVFLVLVAIAFAIN). The Cytoplasmic portion of the chain corresponds to 52–114 (HFWCQEEREP…EEGRVHSTPM (63 aa)). The residue at position 85 (serine 85) is a Phosphoserine. The interval 92–114 (SNEHENAYENTSEEEGRVHSTPM) is disordered. Positions 105-114 (EEGRVHSTPM) are enriched in basic and acidic residues.

The protein belongs to the PDZK1-interacting protein 1/SMIM24 family. Forms a heterodimer (via N-terminal transmembrane helix) with SLC5A2/SGLT2 (via TM13); this interaction enhances SLC5A2 transporter activity. Interacts with PDZK1.

The protein resides in the apical cell membrane. Its function is as follows. Auxiliary protein of electrogenic Na(+)-coupled sugar symporter SLC5A2/SGLT2 and SLC5A1/SGLT1. Essential for the transporter activity of SLC5A2/SGLT2 but not SLC5A1/SGLT1. In Sus scrofa (Pig), this protein is PDZK1-interacting protein 1.